Consider the following 400-residue polypeptide: CCA-adding enzyme (400 aa).

2 residues coordinate ATP: G28 and R31. Residues G28 and R31 each contribute to the CTP site. Mg(2+)-binding residues include D41 and D43. Residues R112, D155, R158, R161, and R164 each coordinate ATP. The CTP site is built by R112, D155, R158, R161, and R164.

It belongs to the tRNA nucleotidyltransferase/poly(A) polymerase family. Bacterial CCA-adding enzyme type 3 subfamily. Homodimer. Mg(2+) serves as cofactor.

The enzyme catalyses a tRNA precursor + 2 CTP + ATP = a tRNA with a 3' CCA end + 3 diphosphate. It carries out the reaction a tRNA with a 3' CCA end + 2 CTP + ATP = a tRNA with a 3' CCACCA end + 3 diphosphate. Functionally, catalyzes the addition and repair of the essential 3'-terminal CCA sequence in tRNAs without using a nucleic acid template. Adds these three nucleotides in the order of C, C, and A to the tRNA nucleotide-73, using CTP and ATP as substrates and producing inorganic pyrophosphate. tRNA 3'-terminal CCA addition is required both for tRNA processing and repair. Also involved in tRNA surveillance by mediating tandem CCA addition to generate a CCACCA at the 3' terminus of unstable tRNAs. While stable tRNAs receive only 3'-terminal CCA, unstable tRNAs are marked with CCACCA and rapidly degraded. This chain is CCA-adding enzyme, found in Staphylococcus haemolyticus (strain JCSC1435).